We begin with the raw amino-acid sequence, 295 residues long: Glutamyl-Q tRNA(Asp) synthetase (295 aa).

L-glutamate-binding positions include 5–9 (RFAPS) and E41. The 'HIGH' region motif lies at 8 to 18 (PSPTGLLHIGS). The Zn(2+) site is built by C97, C99, Y117, and C121. Y178 and R196 together coordinate L-glutamate. The short motif at 234 to 238 (KWSKQ) is the 'KMSKS' region element. An ATP-binding site is contributed by K237.

The protein belongs to the class-I aminoacyl-tRNA synthetase family. GluQ subfamily. Zn(2+) serves as cofactor.

In terms of biological role, catalyzes the tRNA-independent activation of glutamate in presence of ATP and the subsequent transfer of glutamate onto a tRNA(Asp). Glutamate is transferred on the 2-amino-5-(4,5-dihydroxy-2-cyclopenten-1-yl) moiety of the queuosine in the wobble position of the QUC anticodon. In Neisseria meningitidis serogroup B (strain ATCC BAA-335 / MC58), this protein is Glutamyl-Q tRNA(Asp) synthetase.